The following is a 340-amino-acid chain: uncharacterized protein (340 aa).

The tract at residues 284 to 340 (DHSTPTNYQQETPASQQQLDQENEPIKPSKKSNSSSLPRGTTQPKSNSINRVSKLID) is disordered. Composition is skewed to polar residues over residues 286–303 (STPT…QQLD) and 320–334 (LPRG…SINR).

This is an uncharacterized protein from Mycoplasma genitalium (strain ATCC 33530 / DSM 19775 / NCTC 10195 / G37) (Mycoplasmoides genitalium).